Here is a 272-residue protein sequence, read N- to C-terminus: Ribosomal RNA small subunit methyltransferase A (272 aa).

S-adenosyl-L-methionine-binding residues include Asn-18, Leu-20, Gly-45, Glu-66, Asp-91, and Asn-113.

The protein belongs to the class I-like SAM-binding methyltransferase superfamily. rRNA adenine N(6)-methyltransferase family. RsmA subfamily.

The protein resides in the cytoplasm. The enzyme catalyses adenosine(1518)/adenosine(1519) in 16S rRNA + 4 S-adenosyl-L-methionine = N(6)-dimethyladenosine(1518)/N(6)-dimethyladenosine(1519) in 16S rRNA + 4 S-adenosyl-L-homocysteine + 4 H(+). Functionally, specifically dimethylates two adjacent adenosines (A1518 and A1519) in the loop of a conserved hairpin near the 3'-end of 16S rRNA in the 30S particle. May play a critical role in biogenesis of 30S subunits. This Proteus mirabilis (strain HI4320) protein is Ribosomal RNA small subunit methyltransferase A.